The following is a 301-amino-acid chain: MEQLVNELIEANVGRVLVDEPLARYTTMKIGGPADILIVPKHVAGIEKTLQLVKKYKTKWTVIGRGSNLLVSDLGIEGVVIRLGEGLDHLEVEKHRVRVGGGYPLIKLSTLLSRQGLAGLEFASGIPGSVGGAVYMNAGAHKSDISNILSKALILFEDGTIDWLTHGEMGFSYRTSVLQTKRPGIVLEAEFQLQIGERERIVSVMQKNKDYRRETQPWNHPCAGSVFRNPTPYFAGDLIEKAGLRGYQIGGAQISEMHGNFIINTGGASAQDVLSLIALIKQTIKDKFGVEMHTEVEIIGR.

In terms of domain architecture, FAD-binding PCMH-type spans 29–196; that stretch reads KIGGPADILI…LEAEFQLQIG (168 aa). Arg174 is an active-site residue. The active-site Proton donor is Ser225. Glu295 is an active-site residue.

The protein belongs to the MurB family. Requires FAD as cofactor.

Its subcellular location is the cytoplasm. It catalyses the reaction UDP-N-acetyl-alpha-D-muramate + NADP(+) = UDP-N-acetyl-3-O-(1-carboxyvinyl)-alpha-D-glucosamine + NADPH + H(+). Its pathway is cell wall biogenesis; peptidoglycan biosynthesis. In terms of biological role, cell wall formation. This is UDP-N-acetylenolpyruvoylglucosamine reductase 1 from Bacillus thuringiensis subsp. konkukian (strain 97-27).